Here is a 552-residue protein sequence, read N- to C-terminus: Undecaprenyl phosphate-alpha-4-amino-4-deoxy-L-arabinose arabinosyl transferase (552 aa).

11 consecutive transmembrane segments (helical) span residues 4 to 24, 81 to 101, 113 to 133, 176 to 196, 207 to 227, 255 to 275, 289 to 309, 313 to 333, 351 to 371, 384 to 404, and 411 to 431; these read IAGWFTLAVLFVLYYIVPLPG, FAVRFGAVLATVLSALLVFWL, VVAVLIYLTSFLVYGVGSYAV, FMTKGFLALAIPVIAVLPWVI, FGPLAVLSAILISLPWVLAIA, APFWYYLPILLIGLLPWLGLL, QGGDFYLLGWAVMPFLLFSIA, LPTYILPCFAPLAILMAGYVQ, LLVGLGGMAAILLVLAPWGIT, VILGTIAFGVWALFGALSLYH, and WSAACLLGVALLIGTALPQQV.

It belongs to the glycosyltransferase 83 family.

Its subcellular location is the cell inner membrane. The enzyme catalyses 4-amino-4-deoxy-alpha-L-arabinopyranosyl di-trans,octa-cis-undecaprenyl phosphate + lipid IVA = lipid IIA + di-trans,octa-cis-undecaprenyl phosphate.. Its pathway is lipopolysaccharide metabolism; 4-amino-4-deoxy-beta-L-arabinose-lipid A biosynthesis. Catalyzes the transfer of the L-Ara4N moiety of the glycolipid undecaprenyl phosphate-alpha-L-Ara4N to lipid A. The modified arabinose is attached to lipid A and is required for resistance to polymyxin and cationic antimicrobial peptides. The protein is Undecaprenyl phosphate-alpha-4-amino-4-deoxy-L-arabinose arabinosyl transferase of Edwardsiella ictaluri (strain 93-146).